The chain runs to 137 residues: ER-derived vesicles protein erv14 (137 aa).

The Cytoplasmic portion of the chain corresponds to 1–9 (MMSFGSFVY). A helical membrane pass occupies residues 10–30 (IACLLLNGANMLLQIFCVIMF). Residues 31-62 (SDLEMDYINPIDLCNKLNDLVMPEIISHTLVT) are Extracellular-facing. A helical membrane pass occupies residues 63-83 (LLLLLGKKWLLFLANLPLLVF). Residues 84–114 (HANQVIHKTHILDATEIFRQLGRHKRDNFIK) are Cytoplasmic-facing. Residues 115–135 (VTFYLIMFFTLLYCMVMSLIQ) form a helical membrane-spanning segment. Topologically, residues 136–137 (EE) are extracellular.

This sequence belongs to the cornichon family.

It is found in the endoplasmic reticulum. The protein resides in the membrane. The protein localises to the golgi apparatus membrane. Regulates export of the secretory proteins from the endoplasmic reticulum in COPII-coated vesicles. The protein is ER-derived vesicles protein erv14 (erv14) of Schizosaccharomyces pombe (strain 972 / ATCC 24843) (Fission yeast).